The following is an 879-amino-acid chain: Phosphoenolpyruvate carboxylase (879 aa).

Residues His-138 and Lys-545 contribute to the active site.

This sequence belongs to the PEPCase type 1 family. Mg(2+) is required as a cofactor.

It carries out the reaction oxaloacetate + phosphate = phosphoenolpyruvate + hydrogencarbonate. Functionally, forms oxaloacetate, a four-carbon dicarboxylic acid source for the tricarboxylic acid cycle. The chain is Phosphoenolpyruvate carboxylase from Haemophilus influenzae (strain 86-028NP).